Reading from the N-terminus, the 800-residue chain is MKARRNKKQIPSFRKLIKTSKVKLENKLKNKQFKQQSTLKKYRKEQRKLRQAVKDAVSKKPIPLENPKEKRPGKRIEREEEEEEEALPLDMMDEDDLQLMKDLGQRVSFLTRDLSSSEPVHAKKRKHERIIDKYEKIPRTLQTAPEKELIHLLPIKDKSGIIPQTREKPVTDSNKDEEDQEEERELEEEIIEDPIQELTIEEHLIERKKKLQEKKMHIAALASAILSDPENNIKKLKELRSMLMEQDPDVAVTVRKLVIVSLMELFKDITPSYKIRPLTEAEKSTKTRKETQKLREFEEGLVSQYKFYLENLEQMVKDWKQRKLKKSNVVSLKAYKGLAEVAVKSLCELLVALPHFNFHNNIIVLIVPLMNDMSKLISEMCCEAVKKLFKQDKLGQASLGVIKVISGFVKGRNYEVRPEMLKTFLCLRIKEVEVKKDTEDINKPKKFMTFKEKRKSLSRMQRKWKKAEEKLERELREAEASESTEKKLKLHTETLNIVFVTYFRILKKAQRSPLLPAVLEGLAKFAHLINVEFFDDLLVVLHTLIESGDLSYQESLHCVQTAFHILSGQGDVLNIDPLKFYTHLYKTLFKLHAGATNEGVEIVLQCLDVMLTKRRKQVSQQRALAFIKRLCTLALHVLPNSSIGILATTRILMHTFPKTDLLLDSESQGSGVFLPELDEPEYCNAQNTALWELHALRRHYHPIVQRFAAHLIAGAPSEGSGALKPELSRRSATELFEAYSMAEMTFNPPVESSNPKIKGKFLQGDSFLNEDLNQLIKRYSSEVATESPLDFTKYLKTSLH.

2 disordered regions span residues 27-93 (KLKN…DMMD) and 160-187 (GIIP…RELE). A compositionally biased stretch (basic residues) spans 40–51 (KKYRKEQRKLRQ). Over residues 66–78 (NPKEKRPGKRIER) the composition is skewed to basic and acidic residues. The span at 79–93 (EEEEEEEALPLDMMD) shows a compositional bias: acidic residues. Over residues 160–174 (GIIPQTREKPVTDSN) the composition is skewed to basic and acidic residues. The span at 175–187 (KDEEDQEEERELE) shows a compositional bias: acidic residues. Residue Lys333 forms a Glycyl lysine isopeptide (Lys-Gly) (interchain with G-Cter in SUMO2) linkage. Residues 451–490 (KEKRKSLSRMQRKWKKAEEKLERELREAEASESTEKKLKL) are a coiled coil. Ser787 is modified (phosphoserine).

This sequence belongs to the CBF/MAK21 family. As to expression, expressed in colon, heart, kidney, liver, lung, placenta, skeletal muscle, small intestine, spleen and thymus.

It is found in the nucleus. It localises to the nucleolus. The protein resides in the nucleus speckle. Functionally, may be required for adipogenesis. In Homo sapiens (Human), this protein is Nucleolar complex protein 3 homolog (NOC3L).